Reading from the N-terminus, the 548-residue chain is Chaperonin GroEL (548 aa).

Residues 30–33 (TLGP), Lys-51, 87–91 (DGTTT), Gly-415, and Asp-495 each bind ATP.

It belongs to the chaperonin (HSP60) family. As to quaternary structure, forms a cylinder of 14 subunits composed of two heptameric rings stacked back-to-back. Interacts with the co-chaperonin GroES.

It is found in the cytoplasm. The catalysed reaction is ATP + H2O + a folded polypeptide = ADP + phosphate + an unfolded polypeptide.. In terms of biological role, together with its co-chaperonin GroES, plays an essential role in assisting protein folding. The GroEL-GroES system forms a nano-cage that allows encapsulation of the non-native substrate proteins and provides a physical environment optimized to promote and accelerate protein folding. The polypeptide is Chaperonin GroEL (Erwinia tasmaniensis (strain DSM 17950 / CFBP 7177 / CIP 109463 / NCPPB 4357 / Et1/99)).